The chain runs to 121 residues: Amelogenin (121 aa).

Disordered regions lie at residues 1–20 (LHHQIIPVLSQQQTPTHALQ) and 32–121 (QPMQ…WPAT). The span at 48–58 (SVTPTQHHQSN) shows a compositional bias: polar residues. A compositionally biased stretch (low complexity) spans 59–71 (LPQPAQQPFQPQV). The segment covering 85–111 (PAHPMPPMPQPPLPPMFPMQPLPPLLP) has biased composition (pro residues).

The protein belongs to the amelogenin family.

The protein resides in the secreted. Its subcellular location is the extracellular space. The protein localises to the extracellular matrix. In terms of biological role, plays a role in the biomineralization of teeth. Seems to regulate the formation of crystallites during the secretory stage of tooth enamel development. Thought to play a major role in the structural organization and mineralization of developing enamel. The chain is Amelogenin (AMEL) from Ornithorhynchus anatinus (Duckbill platypus).